A 568-amino-acid polypeptide reads, in one-letter code: 2-isopropylmalate synthase (568 aa).

The 277-residue stretch at Pro37–Asp313 folds into the Pyruvate carboxyltransferase domain. The Mg(2+) site is built by Asp46, His252, His254, and Asn288. Residues Glu455 to Ser568 are regulatory domain.

It belongs to the alpha-IPM synthase/homocitrate synthase family. LeuA type 2 subfamily. In terms of assembly, homodimer. The cofactor is Mg(2+).

Its subcellular location is the cytoplasm. The catalysed reaction is 3-methyl-2-oxobutanoate + acetyl-CoA + H2O = (2S)-2-isopropylmalate + CoA + H(+). The protein operates within amino-acid biosynthesis; L-leucine biosynthesis; L-leucine from 3-methyl-2-oxobutanoate: step 1/4. In terms of biological role, catalyzes the condensation of the acetyl group of acetyl-CoA with 3-methyl-2-oxobutanoate (2-ketoisovalerate) to form 3-carboxy-3-hydroxy-4-methylpentanoate (2-isopropylmalate). The sequence is that of 2-isopropylmalate synthase from Thermobifida fusca (strain YX).